The following is a 191-amino-acid chain: uncharacterized protein (191 aa).

The region spanning 5–65 (GDSREKILHT…IEAVTYTGKI (61 aa)) is the HTH tetR-type domain. A DNA-binding region (H-T-H motif) is located at residues 28 to 47 (GLNQIVKESGAPKGSLYHFF).

This is an uncharacterized protein from Bacillus subtilis (strain 168).